The sequence spans 105 residues: Flagellar transcriptional regulator FlhD (105 aa).

Belongs to the FlhD family. Homodimer; disulfide-linked. Forms a heterohexamer composed of two FlhC and four FlhD subunits. Each FlhC binds a FlhD dimer, forming a heterotrimer, and a hexamer assembles by dimerization of two heterotrimers.

The protein resides in the cytoplasm. Functions in complex with FlhC as a master transcriptional regulator that regulates transcription of several flagellar and non-flagellar operons by binding to their promoter region. Activates expression of class 2 flagellar genes, including fliA, which is a flagellum-specific sigma factor that turns on the class 3 genes. Also regulates genes whose products function in a variety of physiological pathways. In Ralstonia pickettii (strain 12J), this protein is Flagellar transcriptional regulator FlhD.